The sequence spans 304 residues: MRLPIFLDTDPGIDDAVAIAAAIFAPELDLQLMTTVAGNVSVEKTTRNALQLLHFWNAEIPLAQGAAVPLVRAPRDAASVHGESGMAGYDFVEHNRKPLGIPAFLAIRDALMRAPEPVTLVAIGPLTNIALLLSQCPECKPYIRRLVIMGGSAGRGNCTPNAEFNIAADPEAAACVFRSGIEIVMCGLDVTNQAILTPDYLATLPELNRTGKMLHALFSHYRSGSMQSGLRMHDLCAIAWLVRPDLFTLKPCFVAVETQGEFTSGTTVVDIDGCLGKPANVQVALDLNVKGFQQWVAEVLALVP.

H233 is an active-site residue.

The protein belongs to the IUNH family. RihC subfamily.

Functionally, hydrolyzes both purine and pyrimidine ribonucleosides with a broad-substrate specificity. In Escherichia coli O17:K52:H18 (strain UMN026 / ExPEC), this protein is Non-specific ribonucleoside hydrolase RihC.